The following is a 535-amino-acid chain: MTDQTTRLPVRRALISVSDKTGILEFARELSALGVEILSTGGTYKLLKDNGVAAVEVADYTGFPEMMDGRVKTLHPKIHGGILGRRALDGAVMDEHGIKPIDLVAVNLYPFEATVAKPDCDLADAIENIDIGGPTMVRSAAKNHKDVAIVVNTGDYAGIVESLKAGGLTYAQRFDLALKAFEHTAAYDGMIANYLGTIDLAADTLSTEGRGAFPRTFNSQFIKAQEMRYGENPHQSAAFYVEAKKGEASVSTAIQLQGKELSFNNVADTDAALECVKSFVKPACVIVKHANPCGVAVVPEDEGGIRKAYDLAYATDTESAFGGIIAFNRELDGETAKAIVERQFVEVIIAPKISAAAREVVAAKANVRLLECGEWSAERAAGWDFKRVNGGLLVQSRDIGMIKAEDLKIVTQRAPSEQEIHDLIFAWKVAKFVKSNAIVYAKNRQTVGVGAGQMSRVNSARIAAIKAEHAGLQVQGAVMASDAFFPFRDGIDNAAKAGITAVIQPGGSMRDAEVIAAADEAGIAMVFTGMRHFRH.

The MGS-like domain maps to 6 to 151 (TRLPVRRALI…KNHKDVAIVV (146 aa)).

It belongs to the PurH family.

It catalyses the reaction (6R)-10-formyltetrahydrofolate + 5-amino-1-(5-phospho-beta-D-ribosyl)imidazole-4-carboxamide = 5-formamido-1-(5-phospho-D-ribosyl)imidazole-4-carboxamide + (6S)-5,6,7,8-tetrahydrofolate. It carries out the reaction IMP + H2O = 5-formamido-1-(5-phospho-D-ribosyl)imidazole-4-carboxamide. It participates in purine metabolism; IMP biosynthesis via de novo pathway; 5-formamido-1-(5-phospho-D-ribosyl)imidazole-4-carboxamide from 5-amino-1-(5-phospho-D-ribosyl)imidazole-4-carboxamide (10-formyl THF route): step 1/1. Its pathway is purine metabolism; IMP biosynthesis via de novo pathway; IMP from 5-formamido-1-(5-phospho-D-ribosyl)imidazole-4-carboxamide: step 1/1. This chain is Bifunctional purine biosynthesis protein PurH, found in Ectopseudomonas mendocina (strain ymp) (Pseudomonas mendocina).